We begin with the raw amino-acid sequence, 323 residues long: tRNA U34 carboxymethyltransferase (323 aa).

Carboxy-S-adenosyl-L-methionine is bound by residues Lys-91, Trp-105, Lys-110, Gly-130, Asp-152–Thr-154, Ile-181–Glu-182, Met-196, Tyr-200, and Arg-315.

This sequence belongs to the class I-like SAM-binding methyltransferase superfamily. CmoB family. As to quaternary structure, homotetramer.

It carries out the reaction carboxy-S-adenosyl-L-methionine + 5-hydroxyuridine(34) in tRNA = 5-carboxymethoxyuridine(34) in tRNA + S-adenosyl-L-homocysteine + H(+). Its function is as follows. Catalyzes carboxymethyl transfer from carboxy-S-adenosyl-L-methionine (Cx-SAM) to 5-hydroxyuridine (ho5U) to form 5-carboxymethoxyuridine (cmo5U) at position 34 in tRNAs. This chain is tRNA U34 carboxymethyltransferase, found in Escherichia coli O81 (strain ED1a).